Consider the following 947-residue polypeptide: MAGKARVHELAKELGVTSKEVLARLSEQGEFVKSASSTVEAPVARRLRESFGGGKSAPAKGSDTGAAKGVAKAPQKVPGVSPAAKAPDRSLDAALDKAVGNGAPAPVPAPAPAPTPAPAPAPAQPADSGVAPPAATPAAPAASAAPAPPKAPLPGQRPAPTPGKPAAPQAPHPGMAPGARPGPVPKPGVRTPRVGNNPFSSAQPVDRPIPRPQAPRPGAPRPGAPRPGGASPGNMPPRPGGASGGPRPPRTGAPRPGGGRPGGPGGGRSDGGGGNYRGGGGGVGAAPGGGFRGRPGGGGGGGRPGQRGGAAGAFGRPGGAPRRGRKSKRAKRAEYENMQAPVVGGVRLPHGNGETIRLARGASLSDFADKINANPAALVQALFNLGEMVTATQSVGDETLELLGSEMNYNVQVVSPEDEDRELLESFDLTYGEDSGDESELQTRPPVVTVMGHVDHGKTRLLDTIRKANVREGEAGGITQHIGAYQVSVDHDGTERLITFIDTPGHEAFTAMRARGAKATDIAILVVAADDGVMPQTVEAINHAQAADVPIVVAVNKIDKEGADPAKIRGQLTEYGLVAEDFGGDTMFVDISAKQGTNIEALEEAVLLTADAALDLRANPDMEAQGVAIEAHLDRGRGPVATVLVQRGTLRVGDSVVAGDAYGRVRRMVDEHGEDVEEALPSRPVQVIGFTSVPGAGDNFLVVDEDRIARQIADRRSARKRNALAARSRKRISLEDLDSALKETSQLNLILKGDNAGTVEALEEALMGIEVDDEVALRVIDRGVGGITETNVNLASASDAIIIGFNVRAEGKATELANREGVEIRYYSVIYQAIDEIEKALRGMLKPIYEEVELGRAEIRALFRSSKVGLIAGCMISSGVVRRNAKARLLRDNIVVVENLSIHSLRREKDDVTEVREGFECGMTLGYSDLKEGDFIESYELVQKDRS.

Residues L47–R332 form a disordered region. Residues A86–L95 are compositionally biased toward basic and acidic residues. A compositionally biased stretch (pro residues) spans A105–A123. A compositionally biased stretch (low complexity) spans A131–A145. Composition is skewed to pro residues over residues P146–P171 and P210–P225. A compositionally biased stretch (gly residues) spans R255–G318. The span at R322–K331 shows a compositional bias: basic residues. A tr-type G domain is found at T443 to L614. Residues G452–T459 form a G1 region. G452–T459 is a binding site for GTP. Residues G477–H481 are G2. Residues D502–G505 form a G3 region. GTP is bound by residues D502–H506 and N556–D559. Positions N556–D559 are G4. A G5 region spans residues S592 to K594.

This sequence belongs to the TRAFAC class translation factor GTPase superfamily. Classic translation factor GTPase family. IF-2 subfamily.

It localises to the cytoplasm. In terms of biological role, one of the essential components for the initiation of protein synthesis. Protects formylmethionyl-tRNA from spontaneous hydrolysis and promotes its binding to the 30S ribosomal subunits. Also involved in the hydrolysis of GTP during the formation of the 70S ribosomal complex. The protein is Translation initiation factor IF-2 of Mycobacterium marinum (strain ATCC BAA-535 / M).